We begin with the raw amino-acid sequence, 512 residues long: 2-isopropylmalate synthase (512 aa).

Positions 5-267 constitute a Pyruvate carboxyltransferase domain; sequence LYIFDTTLRD…DSRVDATQIV (263 aa). The Mn(2+) site is built by Asp-14, His-202, His-204, and Asn-238. The regulatory domain stretch occupies residues 393–512; it reads KLVSLKVVSE…EEKMNAQAAA (120 aa).

Belongs to the alpha-IPM synthase/homocitrate synthase family. LeuA type 1 subfamily. As to quaternary structure, homodimer. It depends on Mn(2+) as a cofactor.

It is found in the cytoplasm. It carries out the reaction 3-methyl-2-oxobutanoate + acetyl-CoA + H2O = (2S)-2-isopropylmalate + CoA + H(+). The protein operates within amino-acid biosynthesis; L-leucine biosynthesis; L-leucine from 3-methyl-2-oxobutanoate: step 1/4. Catalyzes the condensation of the acetyl group of acetyl-CoA with 3-methyl-2-oxobutanoate (2-ketoisovalerate) to form 3-carboxy-3-hydroxy-4-methylpentanoate (2-isopropylmalate). In Chromobacterium violaceum (strain ATCC 12472 / DSM 30191 / JCM 1249 / CCUG 213 / NBRC 12614 / NCIMB 9131 / NCTC 9757 / MK), this protein is 2-isopropylmalate synthase.